We begin with the raw amino-acid sequence, 449 residues long: Tubulin alpha-B chain (449 aa).

The GTP site is built by Gln-11, Glu-71, Ser-140, Gly-144, Thr-145, Thr-179, Asn-206, and Asn-228. Glu-71 is a binding site for Mg(2+). Residue Glu-254 is part of the active site.

Belongs to the tubulin family. In terms of assembly, dimer of alpha and beta chains. A typical microtubule is a hollow water-filled tube with an outer diameter of 25 nm and an inner diameter of 15 nM. Alpha-beta heterodimers associate head-to-tail to form protofilaments running lengthwise along the microtubule wall with the beta-tubulin subunit facing the microtubule plus end conferring a structural polarity. Microtubules usually have 13 protofilaments but different protofilament numbers can be found in some organisms and specialized cells. The cofactor is Mg(2+).

It localises to the cytoplasm. The protein localises to the cytoskeleton. The catalysed reaction is GTP + H2O = GDP + phosphate + H(+). Tubulin is the major constituent of microtubules, a cylinder consisting of laterally associated linear protofilaments composed of alpha- and beta-tubulin heterodimers. Microtubules grow by the addition of GTP-tubulin dimers to the microtubule end, where a stabilizing cap forms. Below the cap, tubulin dimers are in GDP-bound state, owing to GTPase activity of alpha-tubulin. This Neurospora crassa (strain ATCC 24698 / 74-OR23-1A / CBS 708.71 / DSM 1257 / FGSC 987) protein is Tubulin alpha-B chain (tba-2).